We begin with the raw amino-acid sequence, 141 residues long: uncharacterized protein (141 aa).

The region spanning 10 to 117 (IFCDIVQGSI…VPKYETGKGF (108 aa)) is the HIT domain. The short motif at 102–106 (HFHLH) is the Histidine triad motif element.

This is an uncharacterized protein from Mycoplasma genitalium (strain ATCC 33530 / DSM 19775 / NCTC 10195 / G37) (Mycoplasmoides genitalium).